Reading from the N-terminus, the 663-residue chain is Probable receptor-like protein kinase At1g49730 (663 aa).

Residues 1–25 form the signal peptide; that stretch reads MVVNSQAFLLALIALLATQLPSLMA. Residues 26 to 254 are Extracellular-facing; it reads ADCPLDFSGS…TNPYHLTMVP (229 aa). 5 N-linked (GlcNAc...) asparagine glycosylation sites follow: asparagine 36, asparagine 46, asparagine 70, asparagine 101, and asparagine 171. Residues 213-243 form a disordered region; sequence SFSPVASPEPSPSTVGGISPSNSDSQMTTSR. The span at 224-243 shows a compositional bias: polar residues; that stretch reads PSTVGGISPSNSDSQMTTSR. Residues 255–275 form a helical membrane-spanning segment; sequence TIGIVVTAVALTMLVVLVILI. The Cytoplasmic portion of the chain corresponds to 276-663; that stretch reads RRKNRELDES…PHSPINGFSF (388 aa). Positions 327–609 constitute a Protein kinase domain; that stretch reads NDFNTVIGQG…ESCDPVHSAF (283 aa). ATP contacts are provided by residues 333–341 and lysine 355; that span reads IGQGGFGTV. The active-site Proton acceptor is aspartate 451. A disordered region spans residues 631–663; it reads RGDSRIFGPSSSTTSRSHYSRSLPHSPINGFSF. The segment covering 640-652 has biased composition (low complexity); that stretch reads SSSTTSRSHYSRS.

It belongs to the protein kinase superfamily. Ser/Thr protein kinase family.

Its subcellular location is the cell membrane. The catalysed reaction is L-seryl-[protein] + ATP = O-phospho-L-seryl-[protein] + ADP + H(+). It carries out the reaction L-threonyl-[protein] + ATP = O-phospho-L-threonyl-[protein] + ADP + H(+). The sequence is that of Probable receptor-like protein kinase At1g49730 from Arabidopsis thaliana (Mouse-ear cress).